The primary structure comprises 131 residues: Large ribosomal subunit protein eL32 (131 aa).

It belongs to the eukaryotic ribosomal protein eL32 family.

This Candida glabrata (strain ATCC 2001 / BCRC 20586 / JCM 3761 / NBRC 0622 / NRRL Y-65 / CBS 138) (Yeast) protein is Large ribosomal subunit protein eL32 (RPL32).